Reading from the N-terminus, the 494-residue chain is Rhamnulokinase (494 aa).

18-22 (ASSGR) contacts ATP. Residues G87 and 242–244 (HDT) contribute to the substrate site. D243 acts as the Proton acceptor in catalysis. Residue T265 participates in ATP binding. Residue N302 coordinates substrate. Q310 is a binding site for ATP. Cysteines 360 and 377 form a disulfide. G411 is a binding site for ATP.

Belongs to the rhamnulokinase family. It depends on Mg(2+) as a cofactor.

The enzyme catalyses L-rhamnulose + ATP = L-rhamnulose 1-phosphate + ADP + H(+). It functions in the pathway carbohydrate degradation; L-rhamnose degradation; glycerone phosphate from L-rhamnose: step 2/3. In terms of biological role, involved in the catabolism of L-rhamnose (6-deoxy-L-mannose). Catalyzes the transfer of the gamma-phosphate group from ATP to the 1-hydroxyl group of L-rhamnulose to yield L-rhamnulose 1-phosphate. The protein is Rhamnulokinase of Enterococcus faecalis (strain ATCC 700802 / V583).